The primary structure comprises 910 residues: Staphylococcal nuclease domain-containing protein 1 (910 aa).

At Ala2 the chain carries N-acetylalanine. 3 TNase-like domains span residues 18-166 (TVQR…MWSE), 193-328 (KPVN…IWRD), and 341-496 (KQFV…LHSK). Residue Thr103 is modified to Phosphothreonine. The residue at position 193 (Lys193) is an N6-acetyllysine. Thr240 is modified (phosphothreonine). Short sequence motifs (nuclear localization signal) lie at residues 321–325 (RRLRI) and 388–392 (KKLRP). Ser426 carries the phosphoserine modification. A Glycyl lysine isopeptide (Lys-Gly) (interchain with G-Cter in SUMO2) cross-link involves residue Lys513. One can recognise a TNase-like 4 domain in the interval 525–660 (GRSEAVVEYV…KQKKEKVWAH (136 aa)). Position 641 is an N6-acetyllysine (Lys641). Ser645 carries the post-translational modification Phosphoserine. In terms of domain architecture, Tudor spans 729–787 (APRRGEFCIAKFVDGEWYRARVEKVESPAKIHVFYIDYGNREVLPSTRLGTLSPAFSTR). Thr779 carries the phosphothreonine modification. 3 positions are modified to phosphoserine: Ser781, Ser785, and Ser909.

As to quaternary structure, forms a ternary complex with STAT6 and POLR2A. Associates with the RNA-induced silencing complex (RISC). Interacts with the RISC components AGO2, FMR1 and TNRC6A. Interacts with GTF2E1 and GTF2E2. Interacts with PIM1. Interacts with STAT5. Interacts with SYT11 (via C2 2 domain); the interaction with SYT11 is direct. In terms of assembly, (Microbial infection) Interacts with EAV NSP1. Binds to acidic transactivation domain of EBNA2. Interacts with SARS-CoV-2 NSP9. Post-translationally, phosphorylated by PIM1 in vitro. Ubiquitously expressed.

The protein localises to the cytoplasm. The protein resides in the nucleus. It is found in the melanosome. It catalyses the reaction Endonucleolytic cleavage to nucleoside 3'-phosphates and 3'-phosphooligonucleotide end-products.. Functionally, endonuclease that mediates miRNA decay of both protein-free and AGO2-loaded miRNAs. As part of its function in miRNA decay, regulates mRNAs involved in G1-to-S phase transition. Functions as a bridging factor between STAT6 and the basal transcription factor. Plays a role in PIM1 regulation of MYB activity. Functions as a transcriptional coactivator for STAT5. Its function is as follows. (Microbial infection) Functions as a transcriptional coactivator for the Epstein-Barr virus nuclear antigen 2 (EBNA2). In terms of biological role, (Microbial infection) Promotes SARS-CoV-2 RNA synthesis by binding to negative-sense RNA and the viral protein nsp9. The chain is Staphylococcal nuclease domain-containing protein 1 (SND1) from Homo sapiens (Human).